The following is a 74-amino-acid chain: Antimicrobial peptide ToAp1 (74 aa).

The first 22 residues, 1 to 22 (MQMKYLIPIFFLVLIVADHCHA), serve as a signal peptide directing secretion. Lys-39 bears the Lysine amide mark. Positions 40-74 (GRRKRDITAQIEQYRNIQKREAAELEELLANLPVY) are excised as a propeptide.

This sequence belongs to the non-disulfide-bridged peptide (NDBP) superfamily. Short antimicrobial peptide (group 4) family. In terms of tissue distribution, expressed by the venom gland.

It localises to the secreted. Antimicrobial peptide. Is able to kill Mycobacterium abscessus subsp. massiliense in a dose-dependent manner. Has antifungal activity against Candida spp. and one Cryptococcus neoformans strains with MICs values ranging from 12.5 to 200 uM. Also shows an inhibitory activity on C.albicans biofilms at high concentrations. Shows low cytotoxic activity and has weak hemolytic activity on human erythrocytes. Shows anti-inflammatory activities, since it decreases release of pro-inflammatory cytokines, and increases release of anti-inflammatory cytokines. Acts by blocking the Toll-like receptor 4 (TLR4). In addition, decreases the expression of costimulatory molecules such as CD80 and CD86 in LPS-stimulated cells. In vivo, does not induce immune cell migration. Helical wheel projections predict an amphipathic peptide with distinct hydrophobic and hydrophilic faces. This chain is Antimicrobial peptide ToAp1, found in Tityus obscurus (Amazonian scorpion).